Reading from the N-terminus, the 383-residue chain is uncharacterized protein (383 aa).

It belongs to the peptidase M20 family.

This is an uncharacterized protein from Staphylococcus aureus (strain bovine RF122 / ET3-1).